The primary structure comprises 212 residues: Uridine kinase (212 aa).

Residue 13 to 20 participates in ATP binding; that stretch reads GGSGSGKT.

It belongs to the uridine kinase family.

The protein resides in the cytoplasm. It carries out the reaction uridine + ATP = UMP + ADP + H(+). It catalyses the reaction cytidine + ATP = CMP + ADP + H(+). Its pathway is pyrimidine metabolism; CTP biosynthesis via salvage pathway; CTP from cytidine: step 1/3. It participates in pyrimidine metabolism; UMP biosynthesis via salvage pathway; UMP from uridine: step 1/1. The chain is Uridine kinase from Bacillus anthracis (strain A0248).